Here is a 156-residue protein sequence, read N- to C-terminus: ATP synthase subunit b (156 aa).

A helical transmembrane segment spans residues 7–27 (LIVQMLVFVVFIGLTMKFIWP).

This sequence belongs to the ATPase B chain family. As to quaternary structure, F-type ATPases have 2 components, F(1) - the catalytic core - and F(0) - the membrane proton channel. F(1) has five subunits: alpha(3), beta(3), gamma(1), delta(1), epsilon(1). F(0) has three main subunits: a(1), b(2) and c(10-14). The alpha and beta chains form an alternating ring which encloses part of the gamma chain. F(1) is attached to F(0) by a central stalk formed by the gamma and epsilon chains, while a peripheral stalk is formed by the delta and b chains.

It localises to the cell inner membrane. Functionally, f(1)F(0) ATP synthase produces ATP from ADP in the presence of a proton or sodium gradient. F-type ATPases consist of two structural domains, F(1) containing the extramembraneous catalytic core and F(0) containing the membrane proton channel, linked together by a central stalk and a peripheral stalk. During catalysis, ATP synthesis in the catalytic domain of F(1) is coupled via a rotary mechanism of the central stalk subunits to proton translocation. Its function is as follows. Component of the F(0) channel, it forms part of the peripheral stalk, linking F(1) to F(0). The sequence is that of ATP synthase subunit b from Coxiella burnetii (strain CbuK_Q154) (Coxiella burnetii (strain Q154)).